Consider the following 206-residue polypeptide: Phosphoribosylglycinamide formyltransferase (206 aa).

13–15 lines the N(1)-(5-phospho-beta-D-ribosyl)glycinamide pocket; that stretch reads GTN. (6R)-10-formyltetrahydrofolate contacts are provided by residues 99–102 and Asn-121; that span reads MIIL. The Proton donor role is filled by His-123. Position 163 (Asp-163) interacts with (6R)-10-formyltetrahydrofolate. Residue Glu-192 coordinates N(1)-(5-phospho-beta-D-ribosyl)glycinamide.

The protein belongs to the GART family.

It catalyses the reaction N(1)-(5-phospho-beta-D-ribosyl)glycinamide + (6R)-10-formyltetrahydrofolate = N(2)-formyl-N(1)-(5-phospho-beta-D-ribosyl)glycinamide + (6S)-5,6,7,8-tetrahydrofolate + H(+). The protein operates within purine metabolism; IMP biosynthesis via de novo pathway; N(2)-formyl-N(1)-(5-phospho-D-ribosyl)glycinamide from N(1)-(5-phospho-D-ribosyl)glycinamide (10-formyl THF route): step 1/1. The sequence is that of Phosphoribosylglycinamide formyltransferase (purN) from Dictyostelium discoideum (Social amoeba).